The following is an 89-amino-acid chain: Small ribosomal subunit protein uS17 (89 aa).

This sequence belongs to the universal ribosomal protein uS17 family. Part of the 30S ribosomal subunit.

Functionally, one of the primary rRNA binding proteins, it binds specifically to the 5'-end of 16S ribosomal RNA. This Xylella fastidiosa (strain 9a5c) protein is Small ribosomal subunit protein uS17.